The sequence spans 118 residues: NADH-ubiquinone oxidoreductase chain 3 (118 aa).

3 consecutive transmembrane segments (helical) span residues 9 to 29 (IYLV…FLFA), 62 to 82 (LVSI…PWAV), and 87 to 107 (IDLF…IGFL).

The protein belongs to the complex I subunit 3 family.

It is found in the mitochondrion membrane. It carries out the reaction a ubiquinone + NADH + 5 H(+)(in) = a ubiquinol + NAD(+) + 4 H(+)(out). Core subunit of the mitochondrial membrane respiratory chain NADH dehydrogenase (Complex I) that is believed to belong to the minimal assembly required for catalysis. Complex I functions in the transfer of electrons from NADH to the respiratory chain. The immediate electron acceptor for the enzyme is believed to be ubiquinone. This chain is NADH-ubiquinone oxidoreductase chain 3 (ND3), found in Triticum aestivum (Wheat).